Consider the following 177-residue polypeptide: Bifunctional protein PyrR (177 aa).

Positions 99-111 match the PRPP-binding motif; sequence VVLVDDVLFTGRT.

The protein belongs to the purine/pyrimidine phosphoribosyltransferase family. PyrR subfamily.

The catalysed reaction is UMP + diphosphate = 5-phospho-alpha-D-ribose 1-diphosphate + uracil. Regulates the transcription of the pyrimidine nucleotide (pyr) operon in response to exogenous pyrimidines. Its function is as follows. Also displays a weak uracil phosphoribosyltransferase activity which is not physiologically significant. The protein is Bifunctional protein PyrR of Geobacter sulfurreducens (strain ATCC 51573 / DSM 12127 / PCA).